The chain runs to 497 residues: Intermediate filament protein A (497 aa).

Residues 1–32 form a coil 1A region; sequence MSDLNDRLASYIEKVRFLEAQNRKLAADLDLL. The region spanning 1–342 is the IF rod domain; it reads MSDLNDRLAS…KMLEGEENRA (342 aa). Positions 33-46 are linker 1; the sequence is RGRWGKDTLSVRAM. The interval 47–184 is coil 1B; it reads YEGELQEARK…RVHDQEIAEL (138 aa). Residues 185–202 form a linker 12 region; it reads QAMASRDTTPENREYFKN. A coil 2 region spans residues 203–342; the sequence is ELASAIRDIR…KMLEGEENRA (140 aa). The interval 343–497 is tail; the sequence is GLRQLVEQVV…THIQRSSHTI (155 aa). The LTD domain occupies 375-493; sequence SRTSFQRSAK…EERATHIQRS (119 aa).

This sequence belongs to the intermediate filament family. In terms of assembly, a and B can form homopolymers. As to expression, giant body muscle cells.

The protein resides in the cytoplasm. The sequence is that of Intermediate filament protein A from Ascaris suum (Pig roundworm).